Reading from the N-terminus, the 438-residue chain is Cytochrome P450 monooxygenase claJ (438 aa).

Residue Cys378 coordinates heme.

It belongs to the cytochrome P450 family. It depends on heme as a cofactor.

The protein operates within secondary metabolite biosynthesis. Functionally, cytochrome P450 monooxygenase; part of the cla gene cluster that produces clavatol and ortho-quinone methide. The clavatol biosynthesis cluster cla and the terrestric acid cluster tra are both involved in the production of peniphenones and penilactones. The non-reducing PKS claF is responsible for the formation of clavatol from successive condensations of 3 malonyl-CoA units, presumably with a simple acetyl-CoA starter unit, and 2 methylation steps. The esterase claE probably collaborates with claF by catalyzing the hydrolysis of ACP-bound acyl intermediates to free the ACP from stalled intermediates. The clavatol oxidase claD then converts clavatol to hydroxyclavatol. Spontaneous dehydration of hydroxyclavatol leads to the accumulation of the highly active ortho-quinone methide. On the other hand, the PKS-NRPS hybrid traA is involved in the formation of crustosic acid, with the help of traB and traD. The polyketide synthase module (PKS) of traA is responsible for the synthesis of the polyketide backbone via the condensation of an acetyl-CoA starter unit with 3 malonyl-CoA units. The downstream nonribosomal peptide synthetase (NRPS) module then amidates the carboxyl end of the polyketide with L-malic acid. Because traA lacks a designated enoylreductase (ER) domain, the required activity is provided the enoyl reductase traG. Crustosic acid undergoes decarboxylation and isomerization to the terrestric acid, catalyzed by the 2-oxoglutarate-dependent dioxygenase traH. Both acids are further converted to the 2 gamma-butyrolactones (R)-5-methyltetronic acid and (S)-5-carboxylmethyltetronic acid, with involvement of the cytochrome P450 monooxygenase claJ. Spontaneous addition of the methide to these gamma-butyrolactones leads to peniphenone D and penilactone D, which undergo again stereospecific attacking by methide to give penilactones A and B. The protein is Cytochrome P450 monooxygenase claJ of Penicillium crustosum (Blue mold fungus).